The sequence spans 149 residues: L-alanine exporter AlaE (149 aa).

Helical transmembrane passes span 16-36 (FAMV…LSGM), 46-66 (LVAI…RDLI), 83-105 (ADVL…TVGA), and 115-135 (SSNI…LDYC).

This sequence belongs to the AlaE exporter family.

It localises to the cell inner membrane. In terms of biological role, exports L-alanine. The polypeptide is L-alanine exporter AlaE (Salmonella typhimurium (strain LT2 / SGSC1412 / ATCC 700720)).